A 156-amino-acid polypeptide reads, in one-letter code: ATP synthase subunit b (156 aa).

The helical transmembrane segment at 7-27 (LIGELIAFTVFVLFCMKFVWP) threads the bilayer.

Belongs to the ATPase B chain family. F-type ATPases have 2 components, F(1) - the catalytic core - and F(0) - the membrane proton channel. F(1) has five subunits: alpha(3), beta(3), gamma(1), delta(1), epsilon(1). F(0) has three main subunits: a(1), b(2) and c(10-14). The alpha and beta chains form an alternating ring which encloses part of the gamma chain. F(1) is attached to F(0) by a central stalk formed by the gamma and epsilon chains, while a peripheral stalk is formed by the delta and b chains.

The protein localises to the cell inner membrane. F(1)F(0) ATP synthase produces ATP from ADP in the presence of a proton or sodium gradient. F-type ATPases consist of two structural domains, F(1) containing the extramembraneous catalytic core and F(0) containing the membrane proton channel, linked together by a central stalk and a peripheral stalk. During catalysis, ATP synthesis in the catalytic domain of F(1) is coupled via a rotary mechanism of the central stalk subunits to proton translocation. In terms of biological role, component of the F(0) channel, it forms part of the peripheral stalk, linking F(1) to F(0). The chain is ATP synthase subunit b from Pseudoalteromonas translucida (strain TAC 125).